The chain runs to 277 residues: Large ribosomal subunit protein uL2 (277 aa).

Disordered regions lie at residues 1–23, 36–58, and 219–277; these read MAIK…DFAE, PLHK…GGGH, and TVRG…RKNK. Residues 8–20 are compositionally biased toward polar residues; the sequence is PTSNGRRGMTSSD. Residues 258–277 are compositionally biased toward basic residues; sequence KTRKKKNKSDKFIVRRRKNK.

The protein belongs to the universal ribosomal protein uL2 family. In terms of assembly, part of the 50S ribosomal subunit. Forms a bridge to the 30S subunit in the 70S ribosome.

Functionally, one of the primary rRNA binding proteins. Required for association of the 30S and 50S subunits to form the 70S ribosome, for tRNA binding and peptide bond formation. It has been suggested to have peptidyltransferase activity; this is somewhat controversial. Makes several contacts with the 16S rRNA in the 70S ribosome. This Bacillus licheniformis (strain ATCC 14580 / DSM 13 / JCM 2505 / CCUG 7422 / NBRC 12200 / NCIMB 9375 / NCTC 10341 / NRRL NRS-1264 / Gibson 46) protein is Large ribosomal subunit protein uL2.